Reading from the N-terminus, the 213-residue chain is Nicotinate-nucleotide adenylyltransferase (213 aa).

This sequence belongs to the NadD family.

It carries out the reaction nicotinate beta-D-ribonucleotide + ATP + H(+) = deamido-NAD(+) + diphosphate. Its pathway is cofactor biosynthesis; NAD(+) biosynthesis; deamido-NAD(+) from nicotinate D-ribonucleotide: step 1/1. Its function is as follows. Catalyzes the reversible adenylation of nicotinate mononucleotide (NaMN) to nicotinic acid adenine dinucleotide (NaAD). This is Nicotinate-nucleotide adenylyltransferase from Salmonella typhimurium (strain LT2 / SGSC1412 / ATCC 700720).